A 197-amino-acid polypeptide reads, in one-letter code: Mediator of RNA polymerase II transcription subunit 10 (197 aa).

The segment at 1 to 39 is disordered; sequence MSSTAGTRRPRQITPTSPSPSPEPQPGATNGSSSTINVA. The span at 27-37 shows a compositional bias: polar residues; it reads GATNGSSSTIN.

Belongs to the Mediator complex subunit 10 family. Component of the Mediator complex.

The protein resides in the nucleus. Functionally, component of the Mediator complex, a coactivator involved in the regulated transcription of nearly all RNA polymerase II-dependent genes. Mediator functions as a bridge to convey information from gene-specific regulatory proteins to the basal RNA polymerase II transcription machinery. Mediator is recruited to promoters by direct interactions with regulatory proteins and serves as a scaffold for the assembly of a functional preinitiation complex with RNA polymerase II and the general transcription factors. The chain is Mediator of RNA polymerase II transcription subunit 10 (NUT2) from Mycosarcoma maydis (Corn smut fungus).